The sequence spans 409 residues: Tyrosine--tRNA ligase (409 aa).

The 'HIGH' region signature appears at 54 to 63 (PTAPDIHLGH). A 'KMSKS' region motif is present at residues 238-242 (KMSKS). Residue Lys241 coordinates ATP. The S4 RNA-binding domain maps to 347-407 (QGILRILREA…GKRKFARVKL (61 aa)).

This sequence belongs to the class-I aminoacyl-tRNA synthetase family. TyrS type 2 subfamily. In terms of assembly, homodimer.

Its subcellular location is the cytoplasm. It carries out the reaction tRNA(Tyr) + L-tyrosine + ATP = L-tyrosyl-tRNA(Tyr) + AMP + diphosphate + H(+). Its function is as follows. Catalyzes the attachment of tyrosine to tRNA(Tyr) in a two-step reaction: tyrosine is first activated by ATP to form Tyr-AMP and then transferred to the acceptor end of tRNA(Tyr). This is Tyrosine--tRNA ligase from Bordetella parapertussis (strain 12822 / ATCC BAA-587 / NCTC 13253).